A 266-amino-acid polypeptide reads, in one-letter code: MTSLMCRDDALVQVLNKAGYNPILLPRTGLEPPEIYLYEQGVLRRWGRLATAVPAGSLPDTLQEGEQADISHSETSRKSLQAAGNFLNDALRCIGVNSAPKLDLSFARGAVVTFSFSGVTWRGLDPADIGAALNQGFDPAGLSEEKLRLGMVHVAYDYAYADAIDMTLATDGSAKVDVQALNINGFIDLGGKAECEVKSSTTISFKGKGKPAAFACKLGQVKRAKNRWTFNAREVVGQGFAPEEGAAEPYLLRRGQVLIVEDMQAT.

C6 is lipidated: S-palmitoyl cysteine. The next 4 membrane-spanning stretches (beta stranded) occupy residues 70–86 (ISHS…AGNF), 99–117 (APKL…FSFS), 163–180 (AIDM…DVQA), and 189–205 (LGGK…TISF). The tract at residues 245–266 (GAAEPYLLRRGQVLIVEDMQAT) is C-terminal region.

This sequence belongs to the bacterial gasdermin family. Monomer. In terms of assembly, forms large, homooligomeric ring-shaped pores when inserted in membranes. Cleavage by the adjacently encoded protease (probably ISF6_0256) predicted to occur between Glu-244 and Gly-245 relieves autoinhibition, releasing the N-terminus which initiates loss of cell integrity. In terms of processing, palmitoylation helps stabilize the inactive state; may self palmitoylate. Palmitoylation plays a significant role in pore formation.

The protein resides in the cytoplasm. It is found in the cell inner membrane. The full-length protein before cleavage is inactive: intramolecular interactions between the N-terminal domain and the C-terminal region as well as the lipid modification, mediate autoinhibition. The pyroptosis-like-inducing activity is carried by the released N-terminal domain (Gasdermin bGSDM, N-terminus). Functionally, precursor of a pore-forming protein involved in defense against bacteriophages. Cleavage of this precursor by its dedicated, neighboring protease (probably ISF6_0256) releases the active moiety (gasdermin bGSDM, N-terminus) which inserts into membranes, forming pores and triggering cell death. In terms of biological role, pore-forming protein that causes membrane permeabilization via a pyroptosis-like activity. Makes ring-like pores with an interior pore diameter of 300-400 Angstroms, when integrated in liposomes. This chain is Gasdermin bGSDM, found in Piscinibacter sakaiensis (Ideonella sakaiensis).